The chain runs to 511 residues: Ribonuclease E/G-like protein (511 aa).

The S1 motif domain occupies 35–117 (SDIYLGTVDK…LTANITLSGR (83 aa)). Positions 296 and 339 each coordinate Mg(2+).

Belongs to the RNase E/G family. Mg(2+) is required as a cofactor.

The protein localises to the plastid. It is found in the chloroplast stroma. Its function is as follows. Involved in intercistronic processing of primary transcripts from chloroplast operons. The endonucleolytic activity of the enzyme depends on the number of phosphates at the 5' end, is inhibited by structured RNA, and preferentially cleaves A/U-rich sequences. The protein is Ribonuclease E/G-like protein (rne) of Porphyra purpurea (Red seaweed).